The chain runs to 302 residues: Putative RING-H2 finger protein ATL35 (302 aa).

The first 31 residues, 1–31, serve as a signal peptide directing secretion; the sequence is MTIFARDLIYRIETKVLLPLFLVHLLPYVTC. Residues 50-70 traverse the membrane as a helical segment; sequence TVIAIIVLAIFISLSMVACFL. The RING-type; atypical zinc-finger motif lies at 123–165; that stretch reads CAICLSEFVDKETLRWMPPCSHTFHANCIDVWLSSQSTCPACR. Phosphoserine is present on serine 226.

The protein belongs to the RING-type zinc finger family. ATL subfamily.

It localises to the membrane. It catalyses the reaction S-ubiquitinyl-[E2 ubiquitin-conjugating enzyme]-L-cysteine + [acceptor protein]-L-lysine = [E2 ubiquitin-conjugating enzyme]-L-cysteine + N(6)-ubiquitinyl-[acceptor protein]-L-lysine.. It functions in the pathway protein modification; protein ubiquitination. The chain is Putative RING-H2 finger protein ATL35 (ATL35) from Arabidopsis thaliana (Mouse-ear cress).